The following is a 946-amino-acid chain: Villin-4 (946 aa).

Gelsolin-like repeat units follow at residues 28–109 (NFKP…ETEK), 152–219 (VHVK…EDGK), 274–339 (LEHE…TIMF), and 641–715 (EIHH…PQFF). Disordered regions lie at residues 744 to 789 (ATPS…GRSP), 801 to 832 (PSTRYLSTPPPAVKKLFPRSGGSELPKTSSKQ), and 844 to 902 (GPTK…PAPD). The segment covering 765 to 777 (QDKSQQRTRSMSH) has biased composition (polar residues). Over residues 874–883 (SENEPEDDEN) the composition is skewed to acidic residues. The HP domain maps to 881 to 946 (DENSTIYPYE…NRLKSDLQLF (66 aa)).

The protein belongs to the villin/gelsolin family.

It is found in the cytoplasm. The protein resides in the cytoskeleton. Ca(2+)-regulated actin-binding protein. Binds actin microfilaments (MFs). Involved in actin filament bundling, severing and capping. Caps the barbed end of actin filaments and is able to sever them in a calcium-dependent manner. This Oryza sativa subsp. japonica (Rice) protein is Villin-4.